The following is a 221-amino-acid chain: MALPNQGTVDYPSFKLVIVGDGGTGKTTFVKRHLTGEFEKKYEPTIGVEVHPLDFTTNCGKIRFYCWDTAGQEKFGGLRDGYYIHGQCAIIMFDVTSRLTYKNVPTWHRDLCRVCENIPIVLCGNKVDVKNRQVKAKQVTFHRKKNLQYYEISAKSNYNFEKPFLYLARKLAGDPNLHFVEAVALKPPEVPIDLAMQQQHEAELAAAAAQPLPDDDDDLIE.

Positions 10-174 constitute a Small GTPase Ran-type domain; the sequence is DYPSFKLVIV…LYLARKLAGD (165 aa). Residue 21 to 28 coordinates GTP; the sequence is DGGTGKTT. Residues 40-48 form a switch-I region; sequence KKYEPTIGV. Residues glycine 71, 125–128, and 153–155 contribute to the GTP site; these read NKVD and SAK. Residues 71–87 are switch-II; it reads GQEKFGGLRDGYYIHGQ.

This sequence belongs to the small GTPase superfamily. Ran family. In terms of assembly, found in a nuclear export complex with RanGTP, exportin and pre-miRNA.

The protein resides in the nucleus. Its function is as follows. GTP-binding protein involved in nucleocytoplasmic transport. Required for the import of protein into the nucleus and also for RNA export. Involved in chromatin condensation and control of cell cycle. This Oryza sativa subsp. indica (Rice) protein is GTP-binding nuclear protein Ran-2 (RAN2).